The following is a 516-amino-acid chain: Protein DML1 (516 aa).

Belongs to the misato family.

It localises to the mitochondrion. Functionally, involved in the partitioning of the mitochondrial organelle and mitochondrial DNA (mtDNA) inheritance. This Coccidioides immitis (strain RS) (Valley fever fungus) protein is Protein DML1 (DML1).